The primary structure comprises 890 residues: MPPAHHGSGGRRRPGRGNKGKRDTEAGMTASPDPGYMRPETHAAPSQQTDVRSPASAREHRNADVGVAAPDALTPNAGEQKEVEGVAKVNVAVSSDQPPDWAPSQSDLPPSLSPTTASRPATSSRSPRARSRHSPVASSSAFSSPAPSASALTSASGVPEAPLAAPELKHTLAADEGNPEPRLEGPVERLHARQENPLTDSSDGSYILLEEGESQRACLDRKNRHLRQTTPPGVWTTADLASQNSHSASFASGFRRALLPSGGSGDHDEQASDCRASLRGMQRPCFGSPSTDTRMGAAEGLPLASRRRRQHWRRELRAFGAVALACLRASWHGMKRARLRATRWIDRNAATVRVACYTFLLLVTSTGNTICFKKMIDKMPNYSPCLTQVTTVVFVPVFFALSLYTDYAGGLPQEMADFPKRNFAVMGFLDSFSGVMAIIGAVHTTGTTQVVLQQSCIVFSLLASIVMLRKRFHAAHYLGALVIILGVLVVKLPDLLHPSSDGGGDVFVFNLLYLLSNLPTAVSCVYKEVAFRGVEMGTNYLQAWVALFQFLIGFLVLPLNALPVLGPQRVPLAELPASLWNGTRCLFGFNTIVTNCGGAGNMESPCDNCEGAWKYVGMYLSFNLLYNMFIIFVVKSGGAALTFLVSTLRLPVTALAFCSRAIMGDRAVPPKATDFYGLLVLILGLVIYRAGGIMKRRAQRRAVAAARGHTSSPMMLTPREEEQIGTIFVEEVFAAGELEDGGVTEEDETDDDTSEVEVHPVFSSVVASEPPHVYVHTKRHSHSDGGYHKLPACGSSPAAFTPFTQRMPGTGSESCSRRRNRDGDDERSPRSHACSFDEETGFAGGTGTGRHFSSPGTALSPNRVGGYEPPSMHAVQPAVIGKSRANNGCI.

Disordered regions lie at residues 1–163 (MPPA…EAPL) and 280–300 (GMQR…AAEG). The Cytoplasmic segment spans residues 1–349 (MPPAHHGSGG…RATRWIDRNA (349 aa)). The span at 8-19 (SGGRRRPGRGNK) shows a compositional bias: basic residues. Composition is skewed to low complexity over residues 102-126 (APSQ…SSRS) and 134-156 (SPVA…TSAS). Residues 350-372 (ATVRVACYTFLLLVTSTGNTICF) form a helical membrane-spanning segment. The Vacuolar segment spans residues 373–391 (KKMIDKMPNYSPCLTQVTT). A helical transmembrane segment spans residues 392–412 (VVFVPVFFALSLYTDYAGGLP). Over 413–422 (QEMADFPKRN) the chain is Cytoplasmic. A helical membrane pass occupies residues 423 to 443 (FAVMGFLDSFSGVMAIIGAVH). Residues 444–447 (TTGT) are Vacuolar-facing. The chain crosses the membrane as a helical span at residues 448 to 468 (TQVVLQQSCIVFSLLASIVML). Over 469–471 (RKR) the chain is Cytoplasmic. A helical transmembrane segment spans residues 472 to 492 (FHAAHYLGALVIILGVLVVKL). The Vacuolar portion of the chain corresponds to 493–505 (PDLLHPSSDGGGD). A helical transmembrane segment spans residues 506–526 (VFVFNLLYLLSNLPTAVSCVY). Topologically, residues 527–544 (KEVAFRGVEMGTNYLQAW) are cytoplasmic. A helical transmembrane segment spans residues 545 to 565 (VALFQFLIGFLVLPLNALPVL). The Vacuolar portion of the chain corresponds to 566–614 (GPQRVPLAELPASLWNGTRCLFGFNTIVTNCGGAGNMESPCDNCEGAWK). A glycan (N-linked (GlcNAc...) asparagine) is linked at Asn-581. Cystine bridges form between Cys-585–Cys-609 and Cys-596–Cys-606. A helical membrane pass occupies residues 615 to 634 (YVGMYLSFNLLYNMFIIFVV). The Cytoplasmic segment spans residues 635 to 640 (KSGGAA). A helical membrane pass occupies residues 641-663 (LTFLVSTLRLPVTALAFCSRAIM). Residues 664–673 (GDRAVPPKAT) are Vacuolar-facing. A helical transmembrane segment spans residues 674–694 (DFYGLLVLILGLVIYRAGGIM). Over 695-890 (KRRAQRRAVA…GKSRANNGCI (196 aa)) the chain is Cytoplasmic. The segment at 798–871 (AAFTPFTQRM…NRVGGYEPPS (74 aa)) is disordered.

Belongs to the CRT-like transporter family.

It is found in the vacuole membrane. Nutrient transporter. Involved in maintaining the osmotic homeostasis of the digestive vacuole. Required for the proper organization of the endolysosomal system and, in turn, indirectly for microneme secretion and parasite invasion. Required for bradyzoite viability and cyst development. This is Chloroquine resistance transporter from Toxoplasma gondii.